The chain runs to 857 residues: Facilitated trehalose transporter Tret1-1 (857 aa).

Disordered regions lie at residues 1–28 and 62–203; these read MSGR…KLKE and DPFL…KATS. At 1–392 the chain is on the cytoplasmic side; it reads MSGRDSRGAG…VYRPTTNPIY (392 aa). Polar residues predominate over residues 69–81; that stretch reads VSPQRHPQNTVRT. Over residues 134-143 the composition is skewed to basic and acidic residues; sequence EIREHRDRQQ. The segment covering 171–181 has biased composition (polar residues); that stretch reads GNSNTNSNKAA. Phosphoserine is present on residues Ser-248, Ser-249, Ser-250, Ser-320, and Ser-322. The interval 327–346 is disordered; it reads LTSRQHFQQQRSISTDSRKS. Over residues 330 to 341 the composition is skewed to polar residues; sequence RQHFQQQRSIST. The chain crosses the membrane as a helical span at residues 393-413; the sequence is IWTQVLAALSVSLGSLVVGFV. The Extracellular segment spans residues 414–440; it reads SAYTSPALVSMTDRNITSFEVTQDAGS. N-linked (GlcNAc...) asparagine glycosylation occurs at Asn-428. A helical membrane pass occupies residues 441–461; the sequence is WVGGIMPLAGLAGGIAGGPLI. Residues 462 to 473 are Cytoplasmic-facing; that stretch reads EYLGRRNTILAT. A helical transmembrane segment spans residues 474-494; sequence AVPFIVSSLLIACAVNVAMVL. Residues 495–497 are Extracellular-facing; sequence CGR. The chain crosses the membrane as a helical span at residues 498-518; the sequence is FLAGFCVGIASLSLPVYLGET. The Cytoplasmic portion of the chain corresponds to 519–528; that stretch reads VQPEVRGTLG. Residues 529–549 traverse the membrane as a helical segment; it reads LLPTAFGNIGILLCFVAGSFM. Asn-550 carries an N-linked (GlcNAc...) asparagine glycan. The Extracellular portion of the chain corresponds to 550-552; that stretch reads NWS. The chain crosses the membrane as a helical span at residues 553–573; sequence MLAFLGAALPVPFLILMFLIP. The Cytoplasmic portion of the chain corresponds to 574–636; it reads ETPRWFVGRG…ELFKRINLKP (63 aa). A helical membrane pass occupies residues 637–657; sequence LSISLGLMFFQQFSGINAVIF. The Extracellular portion of the chain corresponds to 658 to 673; that stretch reads YTVQIFKDAGSTIDSN. Residues 674–694 form a helical membrane-spanning segment; the sequence is LCTIIVGIVNFFATFMGILLI. The Cytoplasmic segment spans residues 695 to 700; that stretch reads DRLGRK. The helical transmembrane segment at 701–721 threads the bilayer; it reads ILLYISDIAMILTLSILGGFF. Over 722 to 740 the chain is Extracellular; it reads YCKAHGPDVSHLGWLPLTC. The helical transmembrane segment at 741-761 threads the bilayer; it reads FVIYILGFSLGFGPIPWLMMG. At 762–770 the chain is on the cytoplasmic side; it reads EILPAKIRG. Residues 771–791 form a helical membrane-spanning segment; that stretch reads PAASVVTAFNWFCTFVVTKTF. Residues 792-801 are Extracellular-facing; it reads QDLTGAMGAH. Residues 802-822 form a helical membrane-spanning segment; the sequence is GAFWLFGAICFVGLFFVIIYV. The Cytoplasmic portion of the chain corresponds to 823–857; that stretch reads PETQGKTLEDIERKMMGRVRRMSSVANIKPLSFNM. Residues Ser-845 and Ser-846 each carry the phosphoserine modification.

This sequence belongs to the major facilitator superfamily. Sugar transporter (TC 2.A.1.1) family. Trehalose transporter subfamily.

The protein localises to the cell membrane. Its function is as follows. Low-capacity facilitative transporter for trehalose. Does not transport maltose, sucrose or lactose. Mediates the bidirectional transfer of trehalose. Responsible for the transport of trehalose synthesized in the fat body and the incorporation of trehalose into other tissues that require a carbon source, thereby regulating trehalose levels in the hemolymph. This Drosophila simulans (Fruit fly) protein is Facilitated trehalose transporter Tret1-1.